The following is a 205-amino-acid chain: Urease accessory protein UreE (205 aa).

A disordered region spans residues A171 to S205. A compositionally biased stretch (basic residues) spans H177 to G196.

This sequence belongs to the UreE family.

The protein resides in the cytoplasm. Functionally, involved in urease metallocenter assembly. Binds nickel. Probably functions as a nickel donor during metallocenter assembly. The chain is Urease accessory protein UreE from Bordetella parapertussis (strain 12822 / ATCC BAA-587 / NCTC 13253).